The following is a 233-amino-acid chain: Peptidyl-tRNA hydrolase (233 aa).

Tyrosine 14 is a binding site for tRNA. Catalysis depends on histidine 19, which acts as the Proton acceptor. Residues phenylalanine 64, asparagine 66, and asparagine 112 each contribute to the tRNA site. Residues 187 to 233 (VSPRRSGTGQKGKDKPPAPAKQQATATKAEPEPDTRSALQKLMERFK) are disordered.

The protein belongs to the PTH family. As to quaternary structure, monomer.

It is found in the cytoplasm. It carries out the reaction an N-acyl-L-alpha-aminoacyl-tRNA + H2O = an N-acyl-L-amino acid + a tRNA + H(+). Hydrolyzes ribosome-free peptidyl-tRNAs (with 1 or more amino acids incorporated), which drop off the ribosome during protein synthesis, or as a result of ribosome stalling. In terms of biological role, catalyzes the release of premature peptidyl moieties from peptidyl-tRNA molecules trapped in stalled 50S ribosomal subunits, and thus maintains levels of free tRNAs and 50S ribosomes. This Roseobacter denitrificans (strain ATCC 33942 / OCh 114) (Erythrobacter sp. (strain OCh 114)) protein is Peptidyl-tRNA hydrolase.